The following is a 155-amino-acid chain: D-aminoacyl-tRNA deacylase (155 aa).

The short motif at 137 to 138 is the Gly-cisPro motif, important for rejection of L-amino acids element; it reads GP.

It belongs to the DTD family. Homodimer.

It localises to the cytoplasm. The catalysed reaction is glycyl-tRNA(Ala) + H2O = tRNA(Ala) + glycine + H(+). It carries out the reaction a D-aminoacyl-tRNA + H2O = a tRNA + a D-alpha-amino acid + H(+). An aminoacyl-tRNA editing enzyme that deacylates mischarged D-aminoacyl-tRNAs. Also deacylates mischarged glycyl-tRNA(Ala), protecting cells against glycine mischarging by AlaRS. Acts via tRNA-based rather than protein-based catalysis; rejects L-amino acids rather than detecting D-amino acids in the active site. By recycling D-aminoacyl-tRNA to D-amino acids and free tRNA molecules, this enzyme counteracts the toxicity associated with the formation of D-aminoacyl-tRNA entities in vivo and helps enforce protein L-homochirality. The chain is D-aminoacyl-tRNA deacylase from Paracidovorax citrulli (strain AAC00-1) (Acidovorax citrulli).